We begin with the raw amino-acid sequence, 499 residues long: Increased recombination centers protein 15 (499 aa).

47-56 (DQRASLGGAY) is a binding site for FAD.

Belongs to the class-I pyridine nucleotide-disulfide oxidoreductase family.

The protein localises to the cytoplasm. The polypeptide is Increased recombination centers protein 15 (IRC15) (Saccharomyces cerevisiae (strain ATCC 204508 / S288c) (Baker's yeast)).